The following is a 324-amino-acid chain: MSIYDDIFKQFPMIDEWSDSDEKILVEPYTYLGINTAKELPSMVTKAFNHWYQVPQPALDIILQIIGPIHAASLLLDDIQDDSDLRGGNPVAHKVYGVAQTINTATYVCFDAYHKVSQLTPFLKSPETTDLWSIINDEIAALHRGQGIELYWRDSLMCPTEEEYLRMIHNKTGAIFRLPIKLLQALSSVDSPPDCFPLLNIVGILFQIQNDISSLSPDFTKDKGFCEDFSEGKFSFPIIHSVKADSSNSLLMDILRLRPKDEATKRKALRFMKDQTKSLDHTFHVLCKLKKTAQEELEKLGGNSELSSILERIQVSPTPEIEDR.

Mg(2+) contacts are provided by D77 and D81.

The protein belongs to the FPP/GGPP synthase family. The cofactor is Mg(2+).

The enzyme catalyses (2E)-geranyl diphosphate + H2O = linalool + diphosphate. It carries out the reaction (2E,6E)-farnesyl diphosphate + H2O = (6E)-nerolidol + diphosphate. Its function is as follows. Terpene synthase that shows monoterpene synthase activity and produces linalool, using geranyl diphosphate (GPP) as substrate. Also shows sesquiterpene synthase activity as it is able to convert farnesyl diphosphate (FPP) into (E)-nerolidol. This is IDS-like terpene synthase 3 from Melampsora lini (Rust fungus).